Consider the following 919-residue polypeptide: Phosphoenolpyruvate carboxylase (919 aa).

Catalysis depends on residues His-138 and Lys-579.

It belongs to the PEPCase type 1 family. It depends on Mg(2+) as a cofactor.

It catalyses the reaction oxaloacetate + phosphate = phosphoenolpyruvate + hydrogencarbonate. Its function is as follows. Forms oxaloacetate, a four-carbon dicarboxylic acid source for the tricarboxylic acid cycle. The chain is Phosphoenolpyruvate carboxylase (ppc) from Corynebacterium efficiens (strain DSM 44549 / YS-314 / AJ 12310 / JCM 11189 / NBRC 100395).